We begin with the raw amino-acid sequence, 388 residues long: Succinate--CoA ligase [ADP-forming] subunit beta (388 aa).

The ATP-grasp domain maps to 9–244 (KQLFARYGLP…QSQEDPREAQ (236 aa)). ATP-binding positions include Lys-46, 53-55 (GRG), Glu-99, Thr-102, and Glu-107. Residues Asn-199 and Asp-213 each contribute to the Mg(2+) site. Substrate contacts are provided by residues Asn-264 and 321–323 (GIV).

This sequence belongs to the succinate/malate CoA ligase beta subunit family. As to quaternary structure, heterotetramer of two alpha and two beta subunits. Mg(2+) serves as cofactor.

The catalysed reaction is succinate + ATP + CoA = succinyl-CoA + ADP + phosphate. It carries out the reaction GTP + succinate + CoA = succinyl-CoA + GDP + phosphate. It participates in carbohydrate metabolism; tricarboxylic acid cycle; succinate from succinyl-CoA (ligase route): step 1/1. In terms of biological role, succinyl-CoA synthetase functions in the citric acid cycle (TCA), coupling the hydrolysis of succinyl-CoA to the synthesis of either ATP or GTP and thus represents the only step of substrate-level phosphorylation in the TCA. The beta subunit provides nucleotide specificity of the enzyme and binds the substrate succinate, while the binding sites for coenzyme A and phosphate are found in the alpha subunit. This Salmonella choleraesuis (strain SC-B67) protein is Succinate--CoA ligase [ADP-forming] subunit beta.